Consider the following 457-residue polypeptide: Exodeoxyribonuclease 7 large subunit (457 aa).

Belongs to the XseA family. As to quaternary structure, heterooligomer composed of large and small subunits.

It is found in the cytoplasm. The enzyme catalyses Exonucleolytic cleavage in either 5'- to 3'- or 3'- to 5'-direction to yield nucleoside 5'-phosphates.. Functionally, bidirectionally degrades single-stranded DNA into large acid-insoluble oligonucleotides, which are then degraded further into small acid-soluble oligonucleotides. The sequence is that of Exodeoxyribonuclease 7 large subunit from Citrobacter koseri (strain ATCC BAA-895 / CDC 4225-83 / SGSC4696).